The primary structure comprises 372 residues: Glutamate 5-kinase (372 aa).

An ATP-binding site is contributed by Lys-14. 3 residues coordinate substrate: Ser-54, Asp-141, and Asn-153. 173 to 174 (TD) is an ATP binding site. The region spanning 280-358 (RGTLVLDDGA…DAIESLLGYS (79 aa)) is the PUA domain.

The protein belongs to the glutamate 5-kinase family.

It localises to the cytoplasm. It carries out the reaction L-glutamate + ATP = L-glutamyl 5-phosphate + ADP. Its pathway is amino-acid biosynthesis; L-proline biosynthesis; L-glutamate 5-semialdehyde from L-glutamate: step 1/2. Catalyzes the transfer of a phosphate group to glutamate to form L-glutamate 5-phosphate. In Pseudomonas entomophila (strain L48), this protein is Glutamate 5-kinase.